Reading from the N-terminus, the 286-residue chain is Acetylglutamate kinase (286 aa).

Residues 63–64 (GG), Arg85, and Asn178 each bind substrate.

Belongs to the acetylglutamate kinase family. ArgB subfamily.

The protein resides in the cytoplasm. The catalysed reaction is N-acetyl-L-glutamate + ATP = N-acetyl-L-glutamyl 5-phosphate + ADP. It functions in the pathway amino-acid biosynthesis; L-arginine biosynthesis; N(2)-acetyl-L-ornithine from L-glutamate: step 2/4. Functionally, catalyzes the ATP-dependent phosphorylation of N-acetyl-L-glutamate. The chain is Acetylglutamate kinase from Clostridioides difficile (strain 630) (Peptoclostridium difficile).